A 222-amino-acid chain; its full sequence is Pyridoxine/pyridoxamine 5'-phosphate oxidase (222 aa).

Residues R14 to Y17 and K71 contribute to the substrate site. FMN is bound by residues R66 to K71, F81 to T82, R87, K88, and Q110. Substrate contacts are provided by Y128, R132, and S136. FMN is bound by residues Q145–S146 and W190. R196–N198 contributes to the substrate binding site. R200 serves as a coordination point for FMN.

It belongs to the pyridoxamine 5'-phosphate oxidase family. In terms of assembly, homodimer. FMN serves as cofactor.

It carries out the reaction pyridoxamine 5'-phosphate + O2 + H2O = pyridoxal 5'-phosphate + H2O2 + NH4(+). It catalyses the reaction pyridoxine 5'-phosphate + O2 = pyridoxal 5'-phosphate + H2O2. It participates in cofactor metabolism; pyridoxal 5'-phosphate salvage; pyridoxal 5'-phosphate from pyridoxamine 5'-phosphate: step 1/1. Its pathway is cofactor metabolism; pyridoxal 5'-phosphate salvage; pyridoxal 5'-phosphate from pyridoxine 5'-phosphate: step 1/1. Catalyzes the oxidation of either pyridoxine 5'-phosphate (PNP) or pyridoxamine 5'-phosphate (PMP) into pyridoxal 5'-phosphate (PLP). The sequence is that of Pyridoxine/pyridoxamine 5'-phosphate oxidase from Prochlorococcus marinus (strain MIT 9303).